Here is a 206-residue protein sequence, read N- to C-terminus: Cytochrome c oxidase assembly protein CtaG (206 aa).

Topologically, residues methionine 1–arginine 12 are cytoplasmic. Residues isoleucine 13 to leucine 35 traverse the membrane as a helical; Signal-anchor for type II membrane protein segment. The Periplasmic portion of the chain corresponds to tyrosine 36–glycine 206. The disordered stretch occupies residues valine 184–glycine 206. Residues glutamate 188 to glycine 206 are compositionally biased toward polar residues.

This sequence belongs to the COX11/CtaG family.

Its subcellular location is the cell inner membrane. Functionally, exerts its effect at some terminal stage of cytochrome c oxidase synthesis, probably by being involved in the insertion of the copper B into subunit I. This chain is Cytochrome c oxidase assembly protein CtaG, found in Mesorhizobium japonicum (strain LMG 29417 / CECT 9101 / MAFF 303099) (Mesorhizobium loti (strain MAFF 303099)).